Consider the following 133-residue polypeptide: Small ribosomal subunit protein uS11 (133 aa).

Belongs to the universal ribosomal protein uS11 family. In terms of assembly, part of the 30S ribosomal subunit. Interacts with proteins S7 and S18. Binds to IF-3.

Functionally, located on the platform of the 30S subunit, it bridges several disparate RNA helices of the 16S rRNA. Forms part of the Shine-Dalgarno cleft in the 70S ribosome. The polypeptide is Small ribosomal subunit protein uS11 (Shouchella clausii (strain KSM-K16) (Alkalihalobacillus clausii)).